Reading from the N-terminus, the 1551-residue chain is UDP-glucose:glycoprotein glucosyltransferase 1 (1551 aa).

A signal peptide spans 1–42 (MCSRGDANAAGAAAARRVTGLCYNMGLLIALALLCLFSLAEA). Residues Asn269, Asn536, Asn1015, and Asn1228 are each glycosylated (N-linked (GlcNAc...) asparagine). The segment at 1244–1551 (KTEEVKQDKD…QEGSQKHEEL (308 aa)) is glucosyltransferase. At Ser1277 the chain carries Phosphoserine. Residues 1531 to 1551 (KELGTLHEEETQEGSQKHEEL) form a disordered region. The short motif at 1548 to 1551 (HEEL) is the Prevents secretion from ER element.

It belongs to the glycosyltransferase 8 family. Monomer as well as in a tight complex with SELENOF. Interacts with METTL23. Part of a large chaperone multiprotein complex comprising DNAJB11, HSP90B1, HSPA5, HYOU, PDIA2, PDIA4, PDIA6, PPIB, SDF2L1, UGGT1 and very small amounts of ERP29, but not, or at very low levels, CALR nor CANX. The cofactor is Ca(2+).

It is found in the endoplasmic reticulum lumen. The protein localises to the endoplasmic reticulum-Golgi intermediate compartment. The catalysed reaction is N(4)-(alpha-D-Man-(1-&gt;2)-alpha-D-Man-(1-&gt;2)-alpha-D-Man-(1-&gt;3)-[alpha-D-Man-(1-&gt;2)-alpha-D-Man-(1-&gt;3)-[alpha-D-Man-(1-&gt;2)-alpha-D-Man-(1-&gt;6)]-alpha-D-Man-(1-&gt;6)]-beta-D-Man-(1-&gt;4)-beta-D-GlcNAc-(1-&gt;4)-beta-D-GlcNAc)-L-asparaginyl-[protein] (N-glucan mannose isomer 9A1,2,3B1,2,3) + UDP-alpha-D-glucose = N(4)-(alpha-D-Glc-(1-&gt;3)-alpha-D-Man-(1-&gt;2)-alpha-D-Man-(1-&gt;2)-alpha-D-Man-(1-&gt;3)-[alpha-D-Man-(1-&gt;2)-alpha-D-Man-(1-&gt;3)-[alpha-D-Man-(1-&gt;2)-alpha-D-Man-(1-&gt;6)]-alpha-D-Man-(1-&gt;6)]-beta-D-Man-(1-&gt;4)-beta-D-GlcNAc-(1-&gt;4)-beta-D-GlcNAc)-L-asparaginyl-[protein] + UDP + H(+). The protein operates within protein modification; protein glycosylation. Recognizes glycoproteins with minor folding defects. Reglucosylates single N-glycans near the misfolded part of the protein, thus providing quality control for protein folding in the endoplasmic reticulum. Reglucosylated proteins are recognized by calreticulin for recycling to the endoplasmic reticulum and refolding or degradation. This is UDP-glucose:glycoprotein glucosyltransferase 1 (Uggt1) from Rattus norvegicus (Rat).